The sequence spans 1099 residues: DNA-directed RNA polymerase subunit beta (1099 aa).

It belongs to the RNA polymerase beta chain family. In terms of assembly, in plastids the minimal PEP RNA polymerase catalytic core is composed of four subunits: alpha, beta, beta', and beta''. When a (nuclear-encoded) sigma factor is associated with the core the holoenzyme is formed, which can initiate transcription.

It localises to the plastid. Its subcellular location is the chloroplast. The catalysed reaction is RNA(n) + a ribonucleoside 5'-triphosphate = RNA(n+1) + diphosphate. Its function is as follows. DNA-dependent RNA polymerase catalyzes the transcription of DNA into RNA using the four ribonucleoside triphosphates as substrates. In Bigelowiella natans (Pedinomonas minutissima), this protein is DNA-directed RNA polymerase subunit beta.